Reading from the N-terminus, the 327-residue chain is MAAPRCCVLWRVCGRGWWRATGHCRLPGCHRSWPWATLGTRSLSQEKRAAETHFGFETVSEGEKGSKVYQVFENVAKKYDLMNDMMSLGIHRAWKDLLIRKMHPLPGTQLLDMAGGTGDIAFRFLSYVQAQHQRRQRRQLRTQQNLSWEEIAKKYQNEEDSLGGSLATVCDINREMLKVGKQKALDQGHTAGLAWVLGDAEELPFDDDSFDVYTIAFGIRNVTHIDQALQEAHRVLKPGGRFLCLEFGQVNDPLISRLYDLYSFQVIPVIGEVIAGDWKSYQYLVESIRKFPNQEDFKDMIEDAGFQRVTYENLTTGIVAIHSGFKL.

Residues 1 to 49 (MAAPRCCVLWRVCGRGWWRATGHCRLPGCHRSWPWATLGTRSLSQEKRA) constitute a mitochondrion transit peptide. S-adenosyl-L-methionine contacts are provided by residues T117, D171, and 199–200 (DA).

This sequence belongs to the class I-like SAM-binding methyltransferase superfamily. MenG/UbiE family. Component of a multi-subunit COQ enzyme complex, composed of at least COQ3, COQ4, COQ5, COQ6, COQ7 and COQ9. Interacts with PYURF; the interaction is direct, stabilizes COQ5 protein and associates PYURF with COQ enzyme complex.

The protein localises to the mitochondrion inner membrane. The catalysed reaction is 2-methoxy-6-(all-trans-decaprenyl)benzene-1,4-diol + S-adenosyl-L-methionine = 5-methoxy-2-methyl-3-(all-trans-decaprenyl)benzene-1,4-diol + S-adenosyl-L-homocysteine + H(+). Its pathway is cofactor biosynthesis; ubiquinone biosynthesis. Methyltransferase required for the conversion of 2-decaprenyl-6-methoxy-1,4-benzoquinol (DDMQH2) to 2-decaprenyl-3-methyl-6-methoxy-1,4-benzoquinol (DMQH2). This chain is 2-methoxy-6-polyprenyl-1,4-benzoquinol methylase, mitochondrial, found in Mus musculus (Mouse).